We begin with the raw amino-acid sequence, 137 residues long: Peptide methionine sulfoxide reductase MsrB (137 aa).

The tract at residues 1-33 is disordered; that stretch reads MSNNQDRPGQITDESLRERLSPEAYAVTRRAGT. Residues 13 to 135 enclose the MsrB domain; it reads DESLRERLSP…NSLSLDFKAA (123 aa). 4 residues coordinate Zn(2+): Cys52, Cys55, Cys101, and Cys104. Cys124 acts as the Nucleophile in catalysis.

It belongs to the MsrB Met sulfoxide reductase family. Requires Zn(2+) as cofactor.

The enzyme catalyses L-methionyl-[protein] + [thioredoxin]-disulfide + H2O = L-methionyl-(R)-S-oxide-[protein] + [thioredoxin]-dithiol. In Thioalkalivibrio sulfidiphilus (strain HL-EbGR7), this protein is Peptide methionine sulfoxide reductase MsrB.